The sequence spans 367 residues: Peptide chain release factor 2 (367 aa).

N5-methylglutamine is present on Q250.

This sequence belongs to the prokaryotic/mitochondrial release factor family. In terms of processing, methylated by PrmC. Methylation increases the termination efficiency of RF2.

The protein localises to the cytoplasm. Functionally, peptide chain release factor 2 directs the termination of translation in response to the peptide chain termination codons UGA and UAA. The protein is Peptide chain release factor 2 of Mycobacteroides abscessus (strain ATCC 19977 / DSM 44196 / CCUG 20993 / CIP 104536 / JCM 13569 / NCTC 13031 / TMC 1543 / L948) (Mycobacterium abscessus).